A 239-amino-acid chain; its full sequence is Endoglucanase A (239 aa).

A signal peptide spans 1-16 (MKLSMTLSLFAATAMG).

It belongs to the glycosyl hydrolase 12 (cellulase H) family.

The catalysed reaction is Endohydrolysis of (1-&gt;4)-beta-D-glucosidic linkages in cellulose, lichenin and cereal beta-D-glucans.. Functionally, has carboxylmethylcellulase activity. This Aspergillus kawachii (strain NBRC 4308) (White koji mold) protein is Endoglucanase A (cekA).